The following is a 311-amino-acid chain: GTP cyclohydrolase MptA (311 aa).

Belongs to the GTP cyclohydrolase IV family. As to quaternary structure, homodimer. Fe(2+) serves as cofactor.

It carries out the reaction GTP + H2O = 7,8-dihydroneopterin 2',3'-cyclic phosphate + formate + diphosphate + H(+). The protein operates within cofactor biosynthesis; 5,6,7,8-tetrahydromethanopterin biosynthesis. Functionally, converts GTP to 7,8-dihydro-D-neopterin 2',3'-cyclic phosphate, the first intermediate in the biosynthesis of coenzyme methanopterin. The sequence is that of GTP cyclohydrolase MptA from Methanobrevibacter smithii (strain ATCC 35061 / DSM 861 / OCM 144 / PS).